A 168-amino-acid polypeptide reads, in one-letter code: MRAVMGININATARSLLLSEFVSAFFLAMRYFFQPKPTLNYPFEKGPISPRFRGEHALRRYPNGEERCIACKLCEAVCPAQAITIEAGPRRNDGTRRTVRYDIDMVKCIYCGLCQEACPVDAIVEGPNFEFATETREELFYDKAKLLANGDRWEREIAKAIELDAPYR.

4Fe-4S ferredoxin-type domains are found at residues 58–88 (LRRY…IEAG) and 99–128 (VRYD…EGPN). The [4Fe-4S] cluster site is built by cysteine 68, cysteine 71, cysteine 74, cysteine 78, cysteine 108, cysteine 111, cysteine 114, and cysteine 118.

The protein belongs to the complex I 23 kDa subunit family. In terms of assembly, NDH-1 is composed of 14 different subunits. Subunits NuoA, H, J, K, L, M, N constitute the membrane sector of the complex. [4Fe-4S] cluster serves as cofactor.

It is found in the cell inner membrane. The catalysed reaction is a quinone + NADH + 5 H(+)(in) = a quinol + NAD(+) + 4 H(+)(out). Functionally, NDH-1 shuttles electrons from NADH, via FMN and iron-sulfur (Fe-S) centers, to quinones in the respiratory chain. The immediate electron acceptor for the enzyme in this species is believed to be ubiquinone. Couples the redox reaction to proton translocation (for every two electrons transferred, four hydrogen ions are translocated across the cytoplasmic membrane), and thus conserves the redox energy in a proton gradient. This Bradyrhizobium diazoefficiens (strain JCM 10833 / BCRC 13528 / IAM 13628 / NBRC 14792 / USDA 110) protein is NADH-quinone oxidoreductase subunit I.